The primary structure comprises 145 residues: Natriuretic peptides A (145 aa).

The N-terminal stretch at 1–23 (MGTSFVGYLTFVLLLLALTKVRG) is a signal peptide. A propeptide spanning residues 24–117 (GPAYNSPLSS…KLRELLNAPR (94 aa)) is cleaved from the precursor. Cys-125 and Cys-141 are disulfide-bonded.

It belongs to the natriuretic peptide family. Cleaved upon secretion to produce the functional hormone.

The protein localises to the secreted. Hormone playing a key role in cardiovascular homeostasis through regulation of natriuresis, diuresis, and vasodilation. Has a cGMP-stimulating activity. The protein is Natriuretic peptides A of Aquarana catesbeiana (American bullfrog).